The sequence spans 261 residues: Cytochrome c oxidase subunit 3 (261 aa).

Over 1-15 (MTHQTHAYHMVNPSP) the chain is Mitochondrial matrix. A helical membrane pass occupies residues 16–34 (WPLTGALSALLMTSGLIMW). Topologically, residues 35-40 (FHFNST) are mitochondrial intermembrane. The chain crosses the membrane as a helical span at residues 41 to 66 (TLLMLGLTTNMLTMYQWWRDVIREST). Over 67-72 (FQGHHT) the chain is Mitochondrial matrix. A helical transmembrane segment spans residues 73–105 (PNVQKGLRYGMILFIISEVLFFTGFFWAFYHSS). Residues 106 to 128 (LAPTPELGGCWPPTGIHPLNPLE) lie on the Mitochondrial intermembrane side of the membrane. A helical membrane pass occupies residues 129–152 (VPLLNTSVLLASGVSITWAHHSLM). The Mitochondrial matrix segment spans residues 153–155 (EGN). A helical transmembrane segment spans residues 156–183 (RNHMLQALFITIALGVYFTLLQASEYYE). Residues 184–190 (APFTISD) lie on the Mitochondrial intermembrane side of the membrane. A helical transmembrane segment spans residues 191–223 (GVYGSTFFVATGFHGLHVIIGSTFLIVCFFRQL). Residues 224–232 (KFHFTSSHH) lie on the Mitochondrial matrix side of the membrane. A helical transmembrane segment spans residues 233-256 (FGFEAAAWYWHFVDVVWLFLYVSI). Topologically, residues 257-261 (YWWGS) are mitochondrial intermembrane.

It belongs to the cytochrome c oxidase subunit 3 family. In terms of assembly, component of the cytochrome c oxidase (complex IV, CIV), a multisubunit enzyme composed of 14 subunits. The complex is composed of a catalytic core of 3 subunits MT-CO1, MT-CO2 and MT-CO3, encoded in the mitochondrial DNA, and 11 supernumerary subunits COX4I, COX5A, COX5B, COX6A, COX6B, COX6C, COX7A, COX7B, COX7C, COX8 and NDUFA4, which are encoded in the nuclear genome. The complex exists as a monomer or a dimer and forms supercomplexes (SCs) in the inner mitochondrial membrane with NADH-ubiquinone oxidoreductase (complex I, CI) and ubiquinol-cytochrome c oxidoreductase (cytochrome b-c1 complex, complex III, CIII), resulting in different assemblies (supercomplex SCI(1)III(2)IV(1) and megacomplex MCI(2)III(2)IV(2)).

Its subcellular location is the mitochondrion inner membrane. It carries out the reaction 4 Fe(II)-[cytochrome c] + O2 + 8 H(+)(in) = 4 Fe(III)-[cytochrome c] + 2 H2O + 4 H(+)(out). Its function is as follows. Component of the cytochrome c oxidase, the last enzyme in the mitochondrial electron transport chain which drives oxidative phosphorylation. The respiratory chain contains 3 multisubunit complexes succinate dehydrogenase (complex II, CII), ubiquinol-cytochrome c oxidoreductase (cytochrome b-c1 complex, complex III, CIII) and cytochrome c oxidase (complex IV, CIV), that cooperate to transfer electrons derived from NADH and succinate to molecular oxygen, creating an electrochemical gradient over the inner membrane that drives transmembrane transport and the ATP synthase. Cytochrome c oxidase is the component of the respiratory chain that catalyzes the reduction of oxygen to water. Electrons originating from reduced cytochrome c in the intermembrane space (IMS) are transferred via the dinuclear copper A center (CU(A)) of subunit 2 and heme A of subunit 1 to the active site in subunit 1, a binuclear center (BNC) formed by heme A3 and copper B (CU(B)). The BNC reduces molecular oxygen to 2 water molecules using 4 electrons from cytochrome c in the IMS and 4 protons from the mitochondrial matrix. The protein is Cytochrome c oxidase subunit 3 (MT-CO3) of Gazella bennettii (Chinkara).